The sequence spans 314 residues: Ferrochelatase (314 aa).

The Fe cation site is built by His184 and Glu259.

Belongs to the ferrochelatase family.

The protein resides in the cytoplasm. The enzyme catalyses heme b + 2 H(+) = protoporphyrin IX + Fe(2+). It functions in the pathway porphyrin-containing compound metabolism; protoheme biosynthesis; protoheme from protoporphyrin-IX: step 1/1. Catalyzes the ferrous insertion into protoporphyrin IX. This is Ferrochelatase from Chlamydia trachomatis serovar D (strain ATCC VR-885 / DSM 19411 / UW-3/Cx).